Reading from the N-terminus, the 72-residue chain is Mitotic-spindle organizing protein 1 (72 aa).

It belongs to the MOZART1 family. In terms of assembly, part of the gamma-tubulin complex.

The protein localises to the cytoplasm. Its subcellular location is the cytoskeleton. It localises to the microtubule organizing center. It is found in the spindle pole body. Functionally, required for gamma-tubulin complex recruitment to the microtubule organizing center (MTOC). This chain is Mitotic-spindle organizing protein 1, found in Cryptococcus neoformans var. neoformans serotype D (strain B-3501A) (Filobasidiella neoformans).